The following is a 530-amino-acid chain: MEPRAVADALETGEEDAVTEALRSFNREHSQSFTFDDAQQEDRKRLAKLLVSVLEQGLSPKHRVTWLQTIRILSRDRSCLDSFASRQSLHALACYADITVSEEPIPQSPDMDVLLESLKCLCNLVLSSPTAQMLAAEARLVVRLAERVGLYRKRSYPHEVQFFDLRLLFLLTALRTDVRQQLFQELHGVRLLTDALELTLGVAPKENPPVMLPAQETERAMEILKVLFNITFDSVKREVDEEDAALYRYLGTLLRHCVMVEAAGDRTEEFHGHTVNLLGNLPLKCLDVLLALELHEGSLEFMGVNMDVISALLAFLEKRLHQTHRLKECVAPVLNVLTECARMHRPARKFLKAQVLPPLRDVRTRPEVGDLLRNKLVRLMTHLDTDVKRVAAEFLFVLCSESVPRFIKYTGYGNAAGLLAARGLMAGGRPEGQYSEDEDTDTEEYREAKASINPVTGRVEEKPPNPMEGMTEEQKEHEAMKLVNMFDKLSRHRVIQPMGMSPRGHLTSLQDAMCETMEGQLSSDPDSDPD.

Position 435 is a phosphoserine (Ser435). 2 positions are modified to phosphothreonine: Thr440 and Thr442. Phosphoserine is present on residues Ser501, Ser522, Ser523, and Ser527.

The protein belongs to the synembryn family. In terms of assembly, interacts with GDP-bound G alpha proteins GNAI1, GNAO1 and GNAQ, and with GNA13 with lower affinity. Does not interact with G-alpha proteins when they are in complex with subunits beta and gamma. Interacts (via C-terminus) with RGS14; the interaction stimulates the dissociation of the complex between RGS14 and the active GTP-bound form of GNAI1. Interacts with NCS1; interaction is favored in the absence of Ca(2+) and myristoylation of NCS1 is not required. Expressed in neurons and neurites of the CA1 and CA2 subregions of the hippocampus (at protein level). In adult brain, it is expressed in the neocortex, hippocampus and cerebellum as well as in the pineal gland and ependymal layer.

It is found in the cytoplasm. It localises to the cell cortex. In terms of biological role, chaperone that specifically binds and folds nascent G alpha proteins prior to G protein heterotrimer formation, promoting their stability and activity: folds GNAI1, GNAO1, GNA13 and GNAQ. Does not fold G(s) G-alpha proteins GNAS nor GNAL. Also acts as a guanine nucleotide exchange factor (GEF) for G alpha proteins by stimulating exchange of bound GDP for free GTP. Involved in regulation of microtubule pulling forces during mitotic movement of chromosomes by stimulating G(i)-alpha protein (GNAI1), possibly leading to release G(i)-alpha-GTP and NuMA proteins from the NuMA-GPSM2-G(i)-alpha-GDP complex. Also acts as an activator for G(q)-alpha (GNAQ) protein by enhancing the G(q)-coupled receptor-mediated ERK activation. This chain is Chaperone Ric-8A, found in Mus musculus (Mouse).